We begin with the raw amino-acid sequence, 399 residues long: uncharacterized protein (399 aa).

Polar residues predominate over residues E197–S206. Residues E197 to E224 are disordered. Residues E207–E224 are compositionally biased toward acidic residues.

This is an uncharacterized protein from Diadromus pulchellus (Parasitic wasp).